Reading from the N-terminus, the 236-residue chain is CHD1 helical C-terminal domain containing protein 1 (236 aa).

Residues 44–145 form a CHD1 helical C-terminal domain (CHCT) region; sequence LDQDTFKTCK…SSQPAKFLVT (102 aa). A disordered region spans residues 184–236; the sequence is LSNMQTPGQGSPLPGQPRSQDHVKKDSLRELSQKPKLKRKRIKEAPETPETEP. Positions 202 to 216 are enriched in basic and acidic residues; the sequence is SQDHVKKDSLRELSQ.

The protein resides in the cytoplasm. Its subcellular location is the nucleus. May play a role in regulation of apoptosis. This is CHD1 helical C-terminal domain containing protein 1 from Homo sapiens (Human).